Here is a 156-residue protein sequence, read N- to C-terminus: MNINATLLGQAISFALFVWFCMKYVWPPLMKAIEERQKKIADGLQAAERAAKDLDLAQANASDQLKEAKRTATEIIEQANKRKSQILDEAREEAQAERQKILAQAEAELEAERNRARDDLRKQVATLAVAGAEKILERSIDKDAQKDILDNITAKL.

The chain crosses the membrane as a helical span at residues 7 to 29 (LLGQAISFALFVWFCMKYVWPPL).

Belongs to the ATPase B chain family. In terms of assembly, F-type ATPases have 2 components, F(1) - the catalytic core - and F(0) - the membrane proton channel. F(1) has five subunits: alpha(3), beta(3), gamma(1), delta(1), epsilon(1). F(0) has three main subunits: a(1), b(2) and c(10-14). The alpha and beta chains form an alternating ring which encloses part of the gamma chain. F(1) is attached to F(0) by a central stalk formed by the gamma and epsilon chains, while a peripheral stalk is formed by the delta and b chains.

The protein resides in the cell inner membrane. Its function is as follows. F(1)F(0) ATP synthase produces ATP from ADP in the presence of a proton or sodium gradient. F-type ATPases consist of two structural domains, F(1) containing the extramembraneous catalytic core and F(0) containing the membrane proton channel, linked together by a central stalk and a peripheral stalk. During catalysis, ATP synthesis in the catalytic domain of F(1) is coupled via a rotary mechanism of the central stalk subunits to proton translocation. Component of the F(0) channel, it forms part of the peripheral stalk, linking F(1) to F(0). This Vibrio alginolyticus protein is ATP synthase subunit b.